Reading from the N-terminus, the 350-residue chain is Glycerol-1-phosphate dehydrogenase [NAD(P)+] (350 aa).

NAD(+) is bound by residues 96–100 (GNIID) and 118–121 (TAPS). Substrate is bound at residue D123. Position 127 (S127) interacts with NAD(+). D170 is a substrate binding site. Positions 170 and 250 each coordinate Zn(2+). H254 contributes to the substrate binding site. Position 266 (H266) interacts with Zn(2+).

This sequence belongs to the glycerol-1-phosphate dehydrogenase family. In terms of assembly, homodimer. It depends on Zn(2+) as a cofactor.

Its subcellular location is the cytoplasm. It catalyses the reaction sn-glycerol 1-phosphate + NAD(+) = dihydroxyacetone phosphate + NADH + H(+). The catalysed reaction is sn-glycerol 1-phosphate + NADP(+) = dihydroxyacetone phosphate + NADPH + H(+). It participates in membrane lipid metabolism; glycerophospholipid metabolism. Functionally, catalyzes the NAD(P)H-dependent reduction of dihydroxyacetonephosphate (DHAP or glycerone phosphate) to glycerol 1-phosphate (G1P). The G1P thus generated is used as the glycerophosphate backbone of phospholipids in the cellular membranes of Archaea. The sequence is that of Glycerol-1-phosphate dehydrogenase [NAD(P)+] from Sulfurisphaera tokodaii (strain DSM 16993 / JCM 10545 / NBRC 100140 / 7) (Sulfolobus tokodaii).